The primary structure comprises 401 residues: Riboflavin biosynthesis protein RibBA (401 aa).

The segment at 1–203 (MTDFQFSKVE…IQQLQEYRRK (203 aa)) is DHBP synthase. Residues 30–31 (RE), aspartate 35, 142–146 (RNGHT), and glutamate 166 each bind D-ribulose 5-phosphate. Glutamate 31 is a binding site for Mg(2+). Histidine 145 contacts Mg(2+). The interval 204-401 (HDSLVKQISV…QIKMGHMFNF (198 aa)) is GTP cyclohydrolase II. 254–258 (RIHSE) contacts GTP. Zn(2+) is bound by residues cysteine 259, cysteine 270, and cysteine 272. GTP is bound by residues glutamine 275, 297–299 (EGR), and threonine 319. Catalysis depends on aspartate 331, which acts as the Proton acceptor; for GTP cyclohydrolase activity. The active-site Nucleophile; for GTP cyclohydrolase activity is arginine 333. Residues threonine 354 and lysine 359 each coordinate GTP.

The protein in the N-terminal section; belongs to the DHBP synthase family. It in the C-terminal section; belongs to the GTP cyclohydrolase II family. Requires Mg(2+) as cofactor. The cofactor is Mn(2+). It depends on Zn(2+) as a cofactor.

It carries out the reaction D-ribulose 5-phosphate = (2S)-2-hydroxy-3-oxobutyl phosphate + formate + H(+). The catalysed reaction is GTP + 4 H2O = 2,5-diamino-6-hydroxy-4-(5-phosphoribosylamino)-pyrimidine + formate + 2 phosphate + 3 H(+). It functions in the pathway cofactor biosynthesis; riboflavin biosynthesis; 2-hydroxy-3-oxobutyl phosphate from D-ribulose 5-phosphate: step 1/1. Its pathway is cofactor biosynthesis; riboflavin biosynthesis; 5-amino-6-(D-ribitylamino)uracil from GTP: step 1/4. Functionally, catalyzes the conversion of D-ribulose 5-phosphate to formate and 3,4-dihydroxy-2-butanone 4-phosphate. Catalyzes the conversion of GTP to 2,5-diamino-6-ribosylamino-4(3H)-pyrimidinone 5'-phosphate (DARP), formate and pyrophosphate. The sequence is that of Riboflavin biosynthesis protein RibBA from Actinobacillus pleuropneumoniae serotype 5b (strain L20).